Consider the following 242-residue polypeptide: MKKTTLIKEGKAKRLYNTDEKDLVWVEYMDQATALNGKRKDHIAGKGELNNQIDCILFEQLVAKGIHTDFVQKLSNNEQLNRKVKIIPLEVVVRNAASGSFQRKFDVSYLQAFDQPVVEFFYKSDELDDPFINTNKAIALKIIDLEESQRLEKMALEINQILKERFAKAHLQLVDFKVEFGKTADDEIVLADEISPDSCRLVDLTTKESLDKDVFRKKTGDLVTVYQEVLNRLNNSQEEVHG.

This sequence belongs to the SAICAR synthetase family.

The catalysed reaction is 5-amino-1-(5-phospho-D-ribosyl)imidazole-4-carboxylate + L-aspartate + ATP = (2S)-2-[5-amino-1-(5-phospho-beta-D-ribosyl)imidazole-4-carboxamido]succinate + ADP + phosphate + 2 H(+). It functions in the pathway purine metabolism; IMP biosynthesis via de novo pathway; 5-amino-1-(5-phospho-D-ribosyl)imidazole-4-carboxamide from 5-amino-1-(5-phospho-D-ribosyl)imidazole-4-carboxylate: step 1/2. The polypeptide is Phosphoribosylaminoimidazole-succinocarboxamide synthase (Pediococcus pentosaceus (strain ATCC 25745 / CCUG 21536 / LMG 10740 / 183-1w)).